The following is a 588-amino-acid chain: Sulfite reductase [NADPH] hemoprotein beta-component (588 aa).

Residues Cys442, Cys448, Cys487, and Cys491 each contribute to the [4Fe-4S] cluster site. Position 491 (Cys491) interacts with siroheme.

Belongs to the nitrite and sulfite reductase 4Fe-4S domain family. In terms of assembly, alpha(8)-beta(8). The alpha component is a flavoprotein, the beta component is a hemoprotein. Siroheme serves as cofactor. The cofactor is [4Fe-4S] cluster.

It carries out the reaction hydrogen sulfide + 3 NADP(+) + 3 H2O = sulfite + 3 NADPH + 4 H(+). Its pathway is sulfur metabolism; hydrogen sulfide biosynthesis; hydrogen sulfide from sulfite (NADPH route): step 1/1. Functionally, component of the sulfite reductase complex that catalyzes the 6-electron reduction of sulfite to sulfide. This is one of several activities required for the biosynthesis of L-cysteine from sulfate. This is Sulfite reductase [NADPH] hemoprotein beta-component from Actinobacillus pleuropneumoniae serotype 3 (strain JL03).